A 342-amino-acid chain; its full sequence is Mitogen-activated protein kinase kinase kinase 20 (342 aa).

Residues 3-268 (WVRGETIGFG…AEMLLNHSFV (266 aa)) form the Protein kinase domain. Residue 9 to 17 (IGFGTFSTV) participates in ATP binding. S18 carries the phosphoserine modification. Phosphothreonine is present on T19. K36 lines the ATP pocket. Phosphotyrosine occurs at positions 41 and 66. S93 and S114 each carry phosphoserine. D131 acts as the Proton acceptor in catalysis. Residues 285–342 (KDEDKVLMSPKCPFEFDDWDSFTLDSNPSFDSPVERLGSLVSGSIPDWSVGGSWLTVR) form a required for MKK3 binding region.

The protein belongs to the protein kinase superfamily. Ser/Thr protein kinase family. Interacts with MKK3 and MPK18 via its C-terminal domain. Binds to MKK5. Autophosphorylates; active in phosphorylated state. Dephosphorylated by ABI1. As to expression, expressed in roots, seedlings, leaves, flower buds, flowers and siliques.

Its subcellular location is the nucleus. It localises to the cytoplasm. The catalysed reaction is L-seryl-[protein] + ATP = O-phospho-L-seryl-[protein] + ADP + H(+). The enzyme catalyses L-threonyl-[protein] + ATP = O-phospho-L-threonyl-[protein] + ADP + H(+). With respect to regulation, activated through serine, threonine and tyrosine phosphorylation, especially upon abscisic acid (ABA) treatment. Restricted activity by ABI1-mediated dephosphorylation. Its function is as follows. Mitogen-activated protein kinase kinase (MAPKK) that phosphorylates both MKK3 and MPK18 and regulate two separate signaling pathways involved in root microtubule functions. MAPKK which regulates abscisic acid (ABA) responses in a MAPKKK20-MKK5-MPK6 cascade involved in root growth (e.g. root cell division and elongation) and stomatal response, probably via MKK5 activation by protein phosphorylation and subsequent activation of MAPK6 by MKK5. Involved in various abiotic stresses (e.g. osmotic stress, cold and hydrogen peroxide) responses by phosphorylating and thus regulating MPK6 activity, in an ABA-independent manner. The protein is Mitogen-activated protein kinase kinase kinase 20 of Arabidopsis thaliana (Mouse-ear cress).